The chain runs to 957 residues: SH3 domain-binding protein 4-B (957 aa).

The SH3 1 domain occupies 54 to 113 (ENVKEVVAIKDYCPNNFTTLKFSKGEHLYVLDASGGDWWYAHNTTEMGYIPSSYVQPLNY). Residues 312-449 (TSIVCRLDSS…LEPVMYVVMV (138 aa)) enclose the ZU5 domain. The region spanning 649-719 (TSLKYGKLIK…HAKNVLVVGK (71 aa)) is the SH3 2 domain.

Homodimer or homooligomer.

The protein resides in the membrane. It localises to the clathrin-coated pit. It is found in the cytoplasmic vesicle. Its subcellular location is the clathrin-coated vesicle. The protein localises to the nucleus. In terms of biological role, possible role in regulating endocytosis of the transferrin receptor at the plasma membrane. Alternatively, may function as a negative regulator of the amino acid-induced TOR signaling by inhibiting the formation of active Rag GTPase complexes. Preferentially binds inactive Rag GTPase complexes and prevents their interaction with the mTORC1 complex inhibiting its relocalization to lysosomes and its activation. Thereby, may indirectly regulate cell growth, proliferation and autophagy. This Xenopus laevis (African clawed frog) protein is SH3 domain-binding protein 4-B (sh3bp4-b).